The sequence spans 194 residues: Probable GTP-binding protein EngB (194 aa).

In terms of domain architecture, EngB-type G spans 22-194; that stretch reads KIPQIAIVGK…LRIFEEVIEK (173 aa). GTP is bound by residues 30-37, 57-61, 75-78, 142-145, and 173-175; these read GKSNVGKS, GKTRG, DLPG, TKAD, and FSA. Mg(2+) contacts are provided by Ser37 and Thr59.

The protein belongs to the TRAFAC class TrmE-Era-EngA-EngB-Septin-like GTPase superfamily. EngB GTPase family. The cofactor is Mg(2+).

Necessary for normal cell division and for the maintenance of normal septation. The polypeptide is Probable GTP-binding protein EngB (Caldanaerobacter subterraneus subsp. tengcongensis (strain DSM 15242 / JCM 11007 / NBRC 100824 / MB4) (Thermoanaerobacter tengcongensis)).